Reading from the N-terminus, the 457-residue chain is Acetylcholine receptor subunit alpha (457 aa).

The N-terminal stretch at M1–G20 is a signal peptide. Over S21–L230 the chain is Extracellular. 2 disulfide bridges follow: C148/C162 and C212/C213. N161 is a glycosylation site (N-linked (GlcNAc...) asparagine). A run of 3 helical transmembrane segments spans residues P231 to L255, M263 to V281, and Y297 to I316. Over N317–H428 the chain is Cytoplasmic. The helical transmembrane segment at I429 to A447 threads the bilayer.

Belongs to the ligand-gated ion channel (TC 1.A.9) family. Acetylcholine receptor (TC 1.A.9.1) subfamily. Alpha-1/CHRNA1 sub-subfamily. One of the alpha chains that assemble within the acetylcholine receptor, a pentamer of two alpha chains, a beta, a delta, and a gamma (in immature muscle) or epsilon (in mature muscle) chains. The muscle heteropentamer composed of alpha-1, beta-1, delta, epsilon subunits interacts with the alpha-conotoxin ImII.

The protein localises to the postsynaptic cell membrane. It is found in the cell membrane. The catalysed reaction is K(+)(in) = K(+)(out). It catalyses the reaction Na(+)(in) = Na(+)(out). Its function is as follows. Upon acetylcholine binding, the AChR responds by an extensive change in conformation that affects all subunits and leads to opening of an ion-conducting channel across the plasma membrane. The sequence is that of Acetylcholine receptor subunit alpha (Chrna1) from Mus musculus (Mouse).